A 790-amino-acid polypeptide reads, in one-letter code: Polyribonucleotide nucleotidyltransferase (790 aa).

Positions 498 and 504 each coordinate Mg(2+). The region spanning 565-624 is the KH domain; that stretch reads PRILRIKIKPEQIGEVIGPGGRVIRAIQEQTGTKISIEEDGTVFISAANEDAARRAVREI. Residues 634–702 form the S1 motif domain; that stretch reads GEIFYGRVVT…PDGKINLSRK (69 aa). Positions 710–790 are disordered; the sequence is AERAATAQAP…KELLGEDEPN (81 aa). Over residues 739 to 755 the composition is skewed to basic and acidic residues; it reads PERRPGPPTPRRPEQRG. The span at 757-772 shows a compositional bias: pro residues; it reads SRPPRPQAQRSTPPPG.

Belongs to the polyribonucleotide nucleotidyltransferase family. It depends on Mg(2+) as a cofactor.

It localises to the cytoplasm. It catalyses the reaction RNA(n+1) + phosphate = RNA(n) + a ribonucleoside 5'-diphosphate. Its function is as follows. Involved in mRNA degradation. Catalyzes the phosphorolysis of single-stranded polyribonucleotides processively in the 3'- to 5'-direction. The protein is Polyribonucleotide nucleotidyltransferase of Thermomicrobium roseum (strain ATCC 27502 / DSM 5159 / P-2).